The sequence spans 185 residues: Peptide deformylase 2 (185 aa).

2 residues coordinate Fe cation: cysteine 108 and histidine 150. Residue glutamate 151 is part of the active site. Histidine 154 is a Fe cation binding site.

It belongs to the polypeptide deformylase family. Fe(2+) is required as a cofactor.

The enzyme catalyses N-terminal N-formyl-L-methionyl-[peptide] + H2O = N-terminal L-methionyl-[peptide] + formate. Removes the formyl group from the N-terminal Met of newly synthesized proteins. Requires at least a dipeptide for an efficient rate of reaction. N-terminal L-methionine is a prerequisite for activity but the enzyme has broad specificity at other positions. This chain is Peptide deformylase 2, found in Nitrosomonas europaea (strain ATCC 19718 / CIP 103999 / KCTC 2705 / NBRC 14298).